The chain runs to 642 residues: Rhotekin-2 (642 aa).

An REM-1 domain is found at Ile-30–Phe-105. The PH domain maps to Leu-306–Tyr-413. Disordered regions lie at residues Thr-505 to Ser-563 and Leu-575 to Trp-642. 2 stretches are compositionally biased toward basic and acidic residues: residues Pro-597–Ile-615 and Ser-632–Trp-642.

This is Rhotekin-2 (rtkn2) from Danio rerio (Zebrafish).